We begin with the raw amino-acid sequence, 329 residues long: Holliday junction branch migration complex subunit RuvB (329 aa).

Residues 1–180 (MKNILQSTEC…FGIPIHLEFY (180 aa)) form a large ATPase domain (RuvB-L) region. Residues I19, R20, G61, K64, T65, T66, 127-129 (EDF), R170, Y180, and R217 contribute to the ATP site. A Mg(2+)-binding site is contributed by T65. Residues 181 to 252 (STEELIKVIQ…FADKALLRLG (72 aa)) form a small ATPAse domain (RuvB-S) region. The interval 255–329 (KLGLDRQDIQ…ISYLKEQSYI (75 aa)) is head domain (RuvB-H). Residues R308 and R313 each coordinate DNA.

This sequence belongs to the RuvB family. Homohexamer. Forms an RuvA(8)-RuvB(12)-Holliday junction (HJ) complex. HJ DNA is sandwiched between 2 RuvA tetramers; dsDNA enters through RuvA and exits via RuvB. An RuvB hexamer assembles on each DNA strand where it exits the tetramer. Each RuvB hexamer is contacted by two RuvA subunits (via domain III) on 2 adjacent RuvB subunits; this complex drives branch migration. In the full resolvosome a probable DNA-RuvA(4)-RuvB(12)-RuvC(2) complex forms which resolves the HJ.

The protein localises to the cytoplasm. It carries out the reaction ATP + H2O = ADP + phosphate + H(+). The RuvA-RuvB-RuvC complex processes Holliday junction (HJ) DNA during genetic recombination and DNA repair, while the RuvA-RuvB complex plays an important role in the rescue of blocked DNA replication forks via replication fork reversal (RFR). RuvA specifically binds to HJ cruciform DNA, conferring on it an open structure. The RuvB hexamer acts as an ATP-dependent pump, pulling dsDNA into and through the RuvAB complex. RuvB forms 2 homohexamers on either side of HJ DNA bound by 1 or 2 RuvA tetramers; 4 subunits per hexamer contact DNA at a time. Coordinated motions by a converter formed by DNA-disengaged RuvB subunits stimulates ATP hydrolysis and nucleotide exchange. Immobilization of the converter enables RuvB to convert the ATP-contained energy into a lever motion, pulling 2 nucleotides of DNA out of the RuvA tetramer per ATP hydrolyzed, thus driving DNA branch migration. The RuvB motors rotate together with the DNA substrate, which together with the progressing nucleotide cycle form the mechanistic basis for DNA recombination by continuous HJ branch migration. Branch migration allows RuvC to scan DNA until it finds its consensus sequence, where it cleaves and resolves cruciform DNA. The sequence is that of Holliday junction branch migration complex subunit RuvB from Ehrlichia canis (strain Jake).